The chain runs to 291 residues: MLILELIKGIILGIVEGLTEFAPVSSTGHMILVDDMWLKSSEFLGSQSAFTFKIVIQLGSVFAGAWVFRERYFEMLHIGKYRHEPIDGIGQKPKRLNLLHIIVGMIPAGVLGLLFDDVIQEYLFSVPTVMIGLFIGAIYMIIADIYSKKVTNPRNVDQINYFQAFVIGLSQAIAMWPGFSRSGSTISTGVLMKMNHKSASDFTFIMAVPVMLAASGLSLVKNMEYIHMSDIGFYVLGFLAAFIVGLIAIKTFLYLISKIKLIPFAIYRIVLVIIIAILYFGFGIGQGITGE.

8 helical membrane-spanning segments follow: residues 1-21 (MLIL…LTEF), 48-68 (SAFT…AWVF), 99-119 (LHII…DDVI), 123-143 (LFSV…MIIA), 159-179 (INYF…WPGF), 200-220 (SDFT…LSLV), 236-256 (LGFL…LYLI), and 269-289 (IVLV…QGIT).

This sequence belongs to the UppP family.

The protein resides in the cell membrane. It catalyses the reaction di-trans,octa-cis-undecaprenyl diphosphate + H2O = di-trans,octa-cis-undecaprenyl phosphate + phosphate + H(+). Functionally, catalyzes the dephosphorylation of undecaprenyl diphosphate (UPP). Confers resistance to bacitracin. This Staphylococcus saprophyticus subsp. saprophyticus (strain ATCC 15305 / DSM 20229 / NCIMB 8711 / NCTC 7292 / S-41) protein is Undecaprenyl-diphosphatase.